The chain runs to 307 residues: UPF0276 protein Bphyt_5128 (307 aa).

It belongs to the UPF0276 family.

This Paraburkholderia phytofirmans (strain DSM 17436 / LMG 22146 / PsJN) (Burkholderia phytofirmans) protein is UPF0276 protein Bphyt_5128.